We begin with the raw amino-acid sequence, 88 residues long: Small ribosomal subunit protein bS16 (88 aa).

It belongs to the bacterial ribosomal protein bS16 family.

In Sorangium cellulosum (strain So ce56) (Polyangium cellulosum (strain So ce56)), this protein is Small ribosomal subunit protein bS16.